The primary structure comprises 194 residues: Adenylate kinase isoenzyme 1 (194 aa).

Position 1 is an N-acetylmethionine (M1). 18-23 provides a ligand contact to ATP; that stretch reads GSGKGT. Residue S38 is modified to Phosphoserine. The NMP stretch occupies residues 38 to 67; that stretch reads STGDLLRAEVSSGSSRGKMLSSIMEKGELV. AMP contacts are provided by residues T39, R44, 65 to 67, 94 to 97, and Q101; these read ELV and GYPR. The LID stretch occupies residues 131 to 141; the sequence is KRGETSGRVDD. Residue R132 participates in ATP binding. Positions 138 and 149 each coordinate AMP. Residue G177 coordinates ATP.

The protein belongs to the adenylate kinase family. AK1 subfamily. In terms of assembly, monomer. It depends on Mg(2+) as a cofactor.

The protein resides in the cytoplasm. The catalysed reaction is a ribonucleoside 5'-phosphate + ATP = a ribonucleoside 5'-diphosphate + ADP. It catalyses the reaction AMP + ATP = 2 ADP. The enzyme catalyses dAMP + ATP = dADP + ADP. It carries out the reaction dATP + AMP = dADP + ADP. The catalysed reaction is dAMP + dATP = 2 dADP. It catalyses the reaction a 2'-deoxyribonucleoside 5'-diphosphate + ATP = a 2'-deoxyribonucleoside 5'-triphosphate + ADP. The enzyme catalyses a ribonucleoside 5'-diphosphate + ATP = a ribonucleoside 5'-triphosphate + ADP. It carries out the reaction CDP + GTP = CTP + GDP. The catalysed reaction is GDP + ATP = GTP + ADP. It catalyses the reaction UDP + ATP = UTP + ADP. The enzyme catalyses GTP + UDP = UTP + GDP. It carries out the reaction dTDP + GTP = dTTP + GDP. The catalysed reaction is dCDP + GTP = dCTP + GDP. It catalyses the reaction dGDP + ATP = dGTP + ADP. The enzyme catalyses dADP + GTP = dATP + GDP. It carries out the reaction thiamine diphosphate + ADP = thiamine triphosphate + AMP. Catalyzes the reversible transfer of the terminal phosphate group between ATP and AMP. Also displays broad nucleoside diphosphate kinase activity. Plays an important role in cellular energy homeostasis and in adenine nucleotide metabolism. Also catalyzes at a very low rate the synthesis of thiamine triphosphate (ThTP) from thiamine diphosphate (ThDP) and ADP. The sequence is that of Adenylate kinase isoenzyme 1 (Ak1) from Rattus norvegicus (Rat).